Reading from the N-terminus, the 596-residue chain is UvrABC system protein C (596 aa).

Residues 14 to 91 (DQPGCYLMKD…IKLHDPKYNV (78 aa)) form the GIY-YIG domain. In terms of domain architecture, UVR spans 196–231 (EAVKKELEVKMLAAAENLEFERAKEFRDQIAHIDTV).

The protein belongs to the UvrC family. In terms of assembly, interacts with UvrB in an incision complex.

The protein resides in the cytoplasm. In terms of biological role, the UvrABC repair system catalyzes the recognition and processing of DNA lesions. UvrC both incises the 5' and 3' sides of the lesion. The N-terminal half is responsible for the 3' incision and the C-terminal half is responsible for the 5' incision. In Lysinibacillus sphaericus (strain C3-41), this protein is UvrABC system protein C.